Here is a 256-residue protein sequence, read N- to C-terminus: Thiazole synthase (256 aa).

Catalysis depends on Lys-95, which acts as the Schiff-base intermediate with DXP. 1-deoxy-D-xylulose 5-phosphate is bound by residues Gly-156, 182–183 (AG), and 204–205 (NT).

It belongs to the ThiG family. Homotetramer. Forms heterodimers with either ThiH or ThiS.

It localises to the cytoplasm. It carries out the reaction [ThiS sulfur-carrier protein]-C-terminal-Gly-aminoethanethioate + 2-iminoacetate + 1-deoxy-D-xylulose 5-phosphate = [ThiS sulfur-carrier protein]-C-terminal Gly-Gly + 2-[(2R,5Z)-2-carboxy-4-methylthiazol-5(2H)-ylidene]ethyl phosphate + 2 H2O + H(+). It participates in cofactor biosynthesis; thiamine diphosphate biosynthesis. Catalyzes the rearrangement of 1-deoxy-D-xylulose 5-phosphate (DXP) to produce the thiazole phosphate moiety of thiamine. Sulfur is provided by the thiocarboxylate moiety of the carrier protein ThiS. In vitro, sulfur can be provided by H(2)S. This Salmonella choleraesuis (strain SC-B67) protein is Thiazole synthase.